The primary structure comprises 284 residues: Acetyl-coenzyme A carboxylase carboxyl transferase subunit beta (284 aa).

The 258-residue stretch at 27–284 (LMTKCPSCKY…ELHDGGVRHV (258 aa)) folds into the CoA carboxyltransferase N-terminal domain. Positions 31, 34, 50, and 52 each coordinate Zn(2+). The C4-type zinc-finger motif lies at 31–52 (CPSCKYMHYTKQLNENHKVCDC).

Belongs to the AccD/PCCB family. Acetyl-CoA carboxylase is a heterohexamer composed of biotin carboxyl carrier protein (AccB), biotin carboxylase (AccC) and two subunits each of ACCase subunit alpha (AccA) and ACCase subunit beta (AccD). Requires Zn(2+) as cofactor.

It localises to the cytoplasm. The enzyme catalyses N(6)-carboxybiotinyl-L-lysyl-[protein] + acetyl-CoA = N(6)-biotinyl-L-lysyl-[protein] + malonyl-CoA. The protein operates within lipid metabolism; malonyl-CoA biosynthesis; malonyl-CoA from acetyl-CoA: step 1/1. In terms of biological role, component of the acetyl coenzyme A carboxylase (ACC) complex. Biotin carboxylase (BC) catalyzes the carboxylation of biotin on its carrier protein (BCCP) and then the CO(2) group is transferred by the transcarboxylase to acetyl-CoA to form malonyl-CoA. In Exiguobacterium sp. (strain ATCC BAA-1283 / AT1b), this protein is Acetyl-coenzyme A carboxylase carboxyl transferase subunit beta.